Reading from the N-terminus, the 206-residue chain is Small ribosomal subunit protein uS4 (206 aa).

Residues 96 to 158 enclose the S4 RNA-binding domain; the sequence is SRLDNVVYRM…AKGQLRIKGA (63 aa).

Belongs to the universal ribosomal protein uS4 family. As to quaternary structure, part of the 30S ribosomal subunit. Contacts protein S5. The interaction surface between S4 and S5 is involved in control of translational fidelity.

Functionally, one of the primary rRNA binding proteins, it binds directly to 16S rRNA where it nucleates assembly of the body of the 30S subunit. With S5 and S12 plays an important role in translational accuracy. In Coxiella burnetii (strain CbuK_Q154) (Coxiella burnetii (strain Q154)), this protein is Small ribosomal subunit protein uS4.